Consider the following 196-residue polypeptide: Charged multivesicular body protein 1a (196 aa).

Met-1 is subject to N-acetylmethionine. A coiled-coil region spans residues 5-42 (LFQLKFTAKQLEKLAKKAEKDSKAEQAKVKKALQQKNV). Ser-101 bears the Phosphoserine mark. A coiled-coil region spans residues 102 to 124 (AMDLQKVSAVMDRFEQQVQNLDV). Ser-173 bears the Phosphoserine mark. Residues 185 to 195 (DQLSRRLAALR) carry the MIT-interacting motif motif.

Belongs to the SNF7 family. As to quaternary structure, probable peripherally associated component of the endosomal sorting required for transport complex III (ESCRT-III). ESCRT-III components are thought to multimerize to form a flat lattice on the perimeter membrane of the endosome. Several assembly forms of ESCRT-III may exist that interact and act sequentially. Self-associates. Interacts with CHMP1B. Interacts with VPS4A. Interacts with VPS4B. Interacts with PHF1. Interacts with IST1. Interacts with MITD1. As to expression, highly expressed in adult heart, kidney and liver. Expressed at lower levels in adult colon, spleen, lung, brain, testis and muscle. Also expressed in myoblasts and embryo fibroblasts.

Its subcellular location is the cytoplasm. The protein resides in the endosome membrane. It is found in the nucleus matrix. Functionally, probable peripherally associated component of the endosomal sorting required for transport complex III (ESCRT-III) which is involved in multivesicular bodies (MVBs) formation and sorting of endosomal cargo proteins into MVBs. MVBs contain intraluminal vesicles (ILVs) that are generated by invagination and scission from the limiting membrane of the endosome and mostly are delivered to lysosomes enabling degradation of membrane proteins, such as stimulated growth factor receptors, lysosomal enzymes and lipids. The MVB pathway appears to require the sequential function of ESCRT-O, -I,-II and -III complexes. ESCRT-III proteins mostly dissociate from the invaginating membrane before the ILV is released. The ESCRT machinery also functions in topologically equivalent membrane fission events, such as the terminal stages of cytokinesis. ESCRT-III proteins are believed to mediate the necessary vesicle extrusion and/or membrane fission activities, possibly in conjunction with the AAA ATPase VPS4. Involved in cytokinesis. Involved in recruiting VPS4A and/or VPS4B to the midbody of dividing cells. May also be involved in chromosome condensation. Targets the Polycomb group (PcG) protein BMI1/PCGF4 to regions of condensed chromatin. May play a role in stable cell cycle progression and in PcG gene silencing. This Mus musculus (Mouse) protein is Charged multivesicular body protein 1a (Chmp1a).